A 707-amino-acid chain; its full sequence is Lipase maturation factor 2 (707 aa).

Transmembrane regions (helical) follow at residues 10 to 30 (AFLW…YVQI), 78 to 98 (MELI…FSCL), 102 to 122 (LVFL…QVFL), 126 to 146 (WDSL…LHAM), 158 to 178 (GVTF…SGVV), 220 to 240 (FSVV…FLPF), 256 to 276 (ILII…VLCC), 309 to 329 (LVSL…VKYF), 358 to 378 (ITFP…LKGM), and 395 to 415 (LQWL…LVPY). The N-linked (GlcNAc...) asparagine glycan is linked to N483. Residues 634–654 (LLLHSFIFGIFTIYFLQAMFG) traverse the membrane as a helical segment. Positions 661–707 (VAKQRHSMPPNEKKKQKPNSGQGESASSKSSGHGTDTVRRNKKNEKS) are disordered. A compositionally biased stretch (low complexity) spans 680–694 (SGQGESASSKSSGHG). Residues 696-707 (DTVRRNKKNEKS) are compositionally biased toward basic and acidic residues.

This sequence belongs to the lipase maturation factor family.

It localises to the endoplasmic reticulum membrane. In terms of biological role, involved in the maturation of specific proteins in the endoplasmic reticulum. This chain is Lipase maturation factor 2 (lmf2), found in Xenopus laevis (African clawed frog).